The chain runs to 602 residues: Non structural protein VP9' (602 aa).

The protein resides in the host cytoplasm. This chain is Non structural protein VP9', found in Callospermophilus lateralis (Golden-mantled ground squirrel).